The sequence spans 131 residues: D-ribose pyranase (131 aa).

Residue His-20 is the Proton donor of the active site. Residues Asp-28, His-98, and 120–122 (YAN) contribute to the substrate site.

Belongs to the RbsD / FucU family. RbsD subfamily. In terms of assembly, homodecamer.

The protein localises to the cytoplasm. The catalysed reaction is beta-D-ribopyranose = beta-D-ribofuranose. The protein operates within carbohydrate metabolism; D-ribose degradation; D-ribose 5-phosphate from beta-D-ribopyranose: step 1/2. Catalyzes the interconversion of beta-pyran and beta-furan forms of D-ribose. The sequence is that of D-ribose pyranase from Bacillus anthracis (strain A0248).